Reading from the N-terminus, the 163-residue chain is Cuticle protein 38 (163 aa).

14 consecutive repeat copies span residues 7–10, 13–16, 20–23, 26–29, 56–59, 62–65, 68–71, 75–78, 81–84, 93–96, 123–126, 135–138, 141–144, and 156–159.

Component of the cuticle of migratory locust which contains more than 100 different structural proteins. The sequence is that of Cuticle protein 38 from Locusta migratoria (Migratory locust).